The chain runs to 642 residues: UvrABC system protein C (642 aa).

Residues 20–97 (ERCGVYRMFD…IKKFQPKFNI (78 aa)) enclose the GIY-YIG domain. One can recognise a UVR domain in the interval 207–242 (KELQENLSKKMEELSSQMRFEEAAEIRDRIKALSYV).

Belongs to the UvrC family. Interacts with UvrB in an incision complex.

It localises to the cytoplasm. In terms of biological role, the UvrABC repair system catalyzes the recognition and processing of DNA lesions. UvrC both incises the 5' and 3' sides of the lesion. The N-terminal half is responsible for the 3' incision and the C-terminal half is responsible for the 5' incision. In Rickettsia felis (strain ATCC VR-1525 / URRWXCal2) (Rickettsia azadi), this protein is UvrABC system protein C.